Here is a 400-residue protein sequence, read N- to C-terminus: MSVIYLDNNATTKVDPEVVEAIMPYLTDYYGNPSSMHTFGGQLGKAVRTAREQVAALLGADESEIVFTSCGTEGDNAAIRAALLAQPEKRHIITTQVEHPAVLNVCKQLETQGYTVTYLSVNGHGQLDLDELEASLTGNTALVTIMYANNETGTVFPIEEIGKRVKERGAIFHVDAVQAVGKIPLNMKTSTIDMLTISGHKIHAPKGIGALYVRRGVRFRPLLIGGHQERGRRAGTENVPGIVGLGKAAELELIHIETAIKKETRLRDRLEQTLLAKIPDCEVNGDVTQRLPNTTNIGFKYIEGEAILLSLNKYGICASSGSACTSGSLEPSHVLRAMGLPYTTLHGSIRFSLCRYTTEAQIDRVIEVMPEIVERLRALSPFKNDEAGWLQAQEQTLAHR.

Residues 71–72 (GT), asparagine 150, glutamine 178, and 198–200 (SGH) contribute to the pyridoxal 5'-phosphate site. Residue lysine 201 is modified to N6-(pyridoxal phosphate)lysine. Threonine 236 is a binding site for pyridoxal 5'-phosphate. The active-site Cysteine persulfide intermediate is cysteine 324. Cysteine 324 contacts [2Fe-2S] cluster.

It belongs to the class-V pyridoxal-phosphate-dependent aminotransferase family. NifS/IscS subfamily. Homodimer. It depends on pyridoxal 5'-phosphate as a cofactor.

It carries out the reaction (sulfur carrier)-H + L-cysteine = (sulfur carrier)-SH + L-alanine. Functionally, catalyzes the removal of elemental sulfur atoms from cysteine to produce alanine. Seems to participate in the biosynthesis of the nitrogenase metalloclusters by providing the inorganic sulfur required for the Fe-S core formation. The sequence is that of Cysteine desulfurase 1 from Trichormus variabilis (strain ATCC 29413 / PCC 7937) (Anabaena variabilis).